Reading from the N-terminus, the 339-residue chain is DNA-directed RNA polymerase subunit alpha (339 aa).

The segment at 1–235 is alpha N-terminal domain (alpha-NTD); sequence MVIQRNWQSL…DQLQLFINFE (235 aa). The segment at 251-339 is alpha C-terminal domain (alpha-CTD); sequence FNRNLLRKVD…DLAKRLEEPF (89 aa).

It belongs to the RNA polymerase alpha chain family. Homodimer. The RNAP catalytic core consists of 2 alpha, 1 beta, 1 beta' and 1 omega subunit. When a sigma factor is associated with the core the holoenzyme is formed, which can initiate transcription.

It catalyses the reaction RNA(n) + a ribonucleoside 5'-triphosphate = RNA(n+1) + diphosphate. Its function is as follows. DNA-dependent RNA polymerase catalyzes the transcription of DNA into RNA using the four ribonucleoside triphosphates as substrates. The polypeptide is DNA-directed RNA polymerase subunit alpha (Granulibacter bethesdensis (strain ATCC BAA-1260 / CGDNIH1)).